We begin with the raw amino-acid sequence, 280 residues long: MATEYASSGEYIKHHLQNLTYGQHADGTWGFAHGAEEAKAMGFWAINVDSMLFSIGLGVLFLFLFRLAAKKATVGVPTGLQNFVEWVIEFIDTSVRGSFSHQNALVAPLALTVFMWVFLMNLMDLLPVDWLPYVATMAGIPYLKVVPSTDPNVTFGLSLSIFFLVLYYSVKMKGAGGFFSELAFQPFPKFLFPVNLLLEGVGLIAKPISLALRLFGNMYAGEMIFILIALMFGGGWVLALFGGALQWAWAVFHILIITLQAFIFMTLTIVYLDMAHAEHH.

The next 7 membrane-spanning stretches (helical) occupy residues 45–65 (AINV…LFLF), 105–125 (LVAP…LMDL), 126–146 (LPVD…LKVV), 159–179 (LSIF…GGFF), 190–210 (FLFP…PISL), 223–243 (MIFI…LFGG), and 250–270 (AVFH…LTIV).

The protein belongs to the ATPase A chain family. F-type ATPases have 2 components, CF(1) - the catalytic core - and CF(0) - the membrane proton channel. CF(1) has five subunits: alpha(3), beta(3), gamma(1), delta(1), epsilon(1). CF(0) has three main subunits: a(1), b(2) and c(9-12). The alpha and beta chains form an alternating ring which encloses part of the gamma chain. CF(1) is attached to CF(0) by a central stalk formed by the gamma and epsilon chains, while a peripheral stalk is formed by the delta and b chains.

The protein resides in the cell inner membrane. Key component of the proton channel; it plays a direct role in the translocation of protons across the membrane. The chain is ATP synthase subunit a from Thiobacillus denitrificans (strain ATCC 25259 / T1).